We begin with the raw amino-acid sequence, 152 residues long: Cell division protein SepF (152 aa).

The segment covering 23-32 (EVAREPEPMQ) has biased composition (basic and acidic residues). The interval 23-42 (EVAREPEPMQKKTKKEKPSK) is disordered.

Belongs to the SepF family. Homodimer. Interacts with FtsZ.

The protein localises to the cytoplasm. Cell division protein that is part of the divisome complex and is recruited early to the Z-ring. Probably stimulates Z-ring formation, perhaps through the cross-linking of FtsZ protofilaments. Its function overlaps with FtsA. The chain is Cell division protein SepF from Listeria welshimeri serovar 6b (strain ATCC 35897 / DSM 20650 / CCUG 15529 / CIP 8149 / NCTC 11857 / SLCC 5334 / V8).